Here is a 299-residue protein sequence, read N- to C-terminus: Tryptophan prenyltransferase ComQ (299 aa).

Mg(2+) is bound by residues Asp67 and Asp71.

Belongs to the FPP/GGPP synthase family. It depends on Mg(2+) as a cofactor.

It localises to the cell membrane. It carries out the reaction L-tryptophyl-[protein] + (2E,6E)-farnesyl diphosphate = (2S,3R)-3-farnesyl-2,3-dihydro-2,N(alpha)-cyclo-L-tryptophyl-[protein] + diphosphate. Functionally, part of a major quorum-sensing system that regulates the development of genetic competence. Involved in the maturation of the competence pheromone ComX. Acts by catalyzing the transfer of a farnesyl group on the ComX pheromone. Shows weak geranylation activity with geranyl diphosphate (GPP). The sequence is that of Tryptophan prenyltransferase ComQ from Bacillus subtilis (strain 168).